The chain runs to 380 residues: Geranylgeranyl pyrophosphate synthase cle6 (380 aa).

The span at 1–19 (MHSVRTSTTSTSSMVSSTM) shows a compositional bias: low complexity. Residues 1-55 (MHSVRTSTTSTSSMVSSTMHPFDAFNAPQPYQQHHPPRWNIHNPHFSQTNGHSIQ) are disordered. The span at 45-55 (HFSQTNGHSIQ) shows a compositional bias: polar residues. Residues lysine 102, arginine 105, and histidine 134 each coordinate isopentenyl diphosphate. Residues aspartate 141 and aspartate 145 each coordinate Mg(2+). Arginine 150 provides a ligand contact to dimethylallyl diphosphate. Arginine 151 contributes to the isopentenyl diphosphate binding site. 3 residues coordinate dimethylallyl diphosphate: lysine 229, threonine 230, and glutamine 263. Aspartate 266 is a Mg(2+) binding site. The dimethylallyl diphosphate site is built by asparagine 270, lysine 280, and lysine 290.

This sequence belongs to the FPP/GGPP synthase family. Mg(2+) is required as a cofactor.

It catalyses the reaction isopentenyl diphosphate + dimethylallyl diphosphate = (2E)-geranyl diphosphate + diphosphate. The catalysed reaction is isopentenyl diphosphate + (2E)-geranyl diphosphate = (2E,6E)-farnesyl diphosphate + diphosphate. The enzyme catalyses isopentenyl diphosphate + (2E,6E)-farnesyl diphosphate = (2E,6E,10E)-geranylgeranyl diphosphate + diphosphate. It participates in secondary metabolite biosynthesis; terpenoid biosynthesis. In terms of biological role, geranylgeranyl pyrophosphate synthase; part of the cluster A that mediates the biosynthesis of chevalone E and its oxidized derivatives that possess a unique five-membered lactone ring and can synergistically enhance the cytotoxicity of doxorubicin (DOX) in breast cancer cells. Within the pathway, cle6 takes part to the biosynthesis of the molecular scaffold by providing geranylgeranyl pyrophosphate (GGPP) to the prenyltransferase cle5 for C-3 geranylgeranylation of triacetic acid lactone. The molecular scaffold is commonly biosynthesized by a series of enzymes including the non-reducing polyketide synthase (NR-PKS) cle1 that produces the alpha-pyrone triacetic acid lactone (TAL); The membrane-bound prenyltransferase cle5 that accepts TAL as its substrate to perform a C-3 geranylgeranylation reaction, in which the pathway-dedicated GGPS cle6 is required to provide GGPP, the other substrate of cle5; the FAD-dependent monooxygenase Cle3 that forms an (S)-epoxide ring at the terminal olefin of the geranylgeranyl group; and the terpene cyclase Cle7 that catalyzes the cyclization of the prenyl group that yields the pentacyclic pathway intermediate chevalone E. Chevalone E can derivatize into seven new oxidized analogs by the cytochrome P450 monooxygenases cle2 (acting at C-20) and cle4 (acting at C-11 and C-12). This is Geranylgeranyl pyrophosphate synthase cle6 from Aspergillus versicolor.